Reading from the N-terminus, the 330-residue chain is ADP-L-glycero-D-manno-heptose-6-epimerase (330 aa).

NADP(+)-binding positions include 10 to 11 (FI), 31 to 32 (DD), Lys-38, Lys-53, 74 to 78 (QGACS), and Asn-91. The active-site Proton acceptor is Tyr-138. Lys-142 is a binding site for NADP(+). Asn-167 provides a ligand contact to substrate. The NADP(+) site is built by Val-168 and Lys-176. Lys-176 (proton acceptor) is an active-site residue. Residues Arg-178, His-185, 199–202 (FAGW), Arg-212, and Tyr-291 each bind substrate.

This sequence belongs to the NAD(P)-dependent epimerase/dehydratase family. HldD subfamily. In terms of assembly, homopentamer. The cofactor is NADP(+).

It carries out the reaction ADP-D-glycero-beta-D-manno-heptose = ADP-L-glycero-beta-D-manno-heptose. It participates in nucleotide-sugar biosynthesis; ADP-L-glycero-beta-D-manno-heptose biosynthesis; ADP-L-glycero-beta-D-manno-heptose from D-glycero-beta-D-manno-heptose 7-phosphate: step 4/4. In terms of biological role, catalyzes the interconversion between ADP-D-glycero-beta-D-manno-heptose and ADP-L-glycero-beta-D-manno-heptose via an epimerization at carbon 6 of the heptose. In Bordetella petrii (strain ATCC BAA-461 / DSM 12804 / CCUG 43448), this protein is ADP-L-glycero-D-manno-heptose-6-epimerase.